A 1323-amino-acid polypeptide reads, in one-letter code: Glutamate receptor ionotropic, NMDA 2D (1323 aa).

Residues 1 to 27 (MRGAGGPRGPRGPAKMLLLLALACASP) form the signal peptide. The Extracellular portion of the chain corresponds to 28 to 579 (FPEEVPGPGA…SPSAFLEPYS (552 aa)). Asn89 carries N-linked (GlcNAc...) asparagine glycosylation. A disulfide bond links Cys101 and Cys345. 4 N-linked (GlcNAc...) asparagine glycosylation sites follow: Asn349, Asn363, Asn381, and Asn464. 2 disulfide bridges follow: Cys452-Cys480 and Cys459-Cys481. Ser536, Thr538, and Arg543 together coordinate L-glutamate. Residue Asn566 is glycosylated (N-linked (GlcNAc...) asparagine). Residues 580–601 (PAVWVMMFVMCLTVVAVTVFIF) form a helical membrane-spanning segment. The Cytoplasmic segment spans residues 602–626 (EYLSPVGYNRSLATGKRPGGSTFTI). Positions 627–638 (GKSIWLLWALVF) form an intramembrane region, discontinuously helical. The pore-forming stretch occupies residues 628-647 (KSIWLLWALVFNNSVPVENP). The Cytoplasmic segment spans residues 639-650 (NNSVPVENPRGT). Residues 651–671 (TSKIMVLVWAFFAVIFLASYT) form a helical membrane-spanning segment. At 672–840 (ANLAAFMIQE…EVMSSKLDID (169 aa)) the chain is on the extracellular side. N-linked (GlcNAc...) asparagine glycosylation is present at Asn712. Residues Ser714, Thr715, and Asp756 each contribute to the L-glutamate site. A disulfide bridge links Cys770 with Cys825. The helical transmembrane segment at 841–864 (NMAGVFYMLLVAMGLSLLVFAWEH) threads the bilayer. Residues 865–1323 (LVYWRLRHCL…AHFSSLESEV (459 aa)) are Cytoplasmic-facing. Disordered stretches follow at residues 897-952 (EAAP…PGGA), 977-1112 (AAPR…SLGG), and 1201-1323 (PWAA…ESEV). Residues 899–929 (APPPAKPPPPPQPLPSPAYPAARPPPGPAPF) are compositionally biased toward pro residues. A compositionally biased stretch (basic and acidic residues) spans 931–940 (PRERAAADRW). The span at 977–986 (AAPRGAAGRP) shows a compositional bias: low complexity. Pro residues predominate over residues 987-1001 (LSPPTTQPPQKPPPS). A compositionally biased stretch (low complexity) spans 1030-1039 (AAAAAAVGPP). Over residues 1080–1092 (TAPPPRRAAPPPC) the composition is skewed to pro residues. Basic residues predominate over residues 1208-1228 (PRRRARCGCPRPHPHRPRASH). Residue Arg1303 is modified to Omega-N-methylarginine. Ser1313 is modified (phosphoserine). Positions 1321 to 1323 (SEV) match the PDZ-binding motif.

The protein belongs to the glutamate-gated ion channel (TC 1.A.10.1) family. NR2D/GRIN2D subfamily. In terms of assembly, heterotetramer. Forms heterotetrameric channels composed of two GluN1/zeta subunits (GRIN1), and two identical GluN2/epsilon subunits (GRIN2A, GRIN2B, GRIN2C or GRIN2D) or GluN3 subunits (GRIN3A or GRIN3B) (in vitro). In vivo, the subunit composition may depend on the expression levels of the different subunits. Interacts with PDZ domains of PATJ and DLG4. In terms of tissue distribution, expressed in brain, mainly in the subcortical region.

It is found in the cell membrane. The protein localises to the postsynaptic cell membrane. The enzyme catalyses Ca(2+)(in) = Ca(2+)(out). It carries out the reaction Na(+)(in) = Na(+)(out). The catalysed reaction is K(+)(in) = K(+)(out). Its function is as follows. Component of N-methyl-D-aspartate (NMDA) receptors (NMDARs) that function as heterotetrameric, ligand-gated cation channels with high calcium permeability and voltage-dependent block by Mg(2+). Participates in synaptic plasticity for learning and memory formation. Channel activation requires binding of the neurotransmitter L-glutamate to the GluN2 subunit, glycine or D-serine binding to the GluN1 subunit, plus membrane depolarization to eliminate channel inhibition by Mg(2+). NMDARs mediate simultaneously the potasium efflux and the influx of calcium and sodium. Each GluN2 subunit confers differential attributes to channel properties, including activation, deactivation and desensitization kinetics, pH sensitivity, Ca2(+) permeability, and binding to allosteric modulators. The polypeptide is Glutamate receptor ionotropic, NMDA 2D (Rattus norvegicus (Rat)).